The primary structure comprises 227 residues: UPF0173 metal-dependent hydrolase BCQ_4418 (227 aa).

This sequence belongs to the UPF0173 family.

The protein is UPF0173 metal-dependent hydrolase BCQ_4418 of Bacillus cereus (strain Q1).